Consider the following 734-residue polypeptide: Photosystem I P700 chlorophyll a apoprotein A2 (734 aa).

Helical transmembrane passes span 46-69 (IFAS…FHVA), 135-158 (LYTG…LHLQ), 175-199 (LNHH…HVAI), 273-291 (MAHH…GHMY), 330-353 (LHMQ…QHMY), 369-395 (ASLY…IFFV), 417-439 (AIIS…LYVH), and 517-535 (FLVH…LILV). [4Fe-4S] cluster is bound by residues Cys559 and Cys568. Transmembrane regions (helical) follow at residues 575 to 596 (AFYL…YWHW) and 643 to 665 (LSVW…MFLI). Chlorophyll a-binding residues include His654, Met662, and Tyr670. Residue Trp671 participates in phylloquinone binding. The chain crosses the membrane as a helical span at residues 707-727 (LVGLAHFSVGYVLTYAAFVLA).

This sequence belongs to the PsaA/PsaB family. In terms of assembly, the PsaA/B heterodimer binds the P700 chlorophyll special pair and subsequent electron acceptors. PSI consists of a core antenna complex that captures photons, and an electron transfer chain that converts photonic excitation into a charge separation. The eukaryotic PSI reaction center is composed of at least 11 subunits. The cofactor is P700 is a chlorophyll a/chlorophyll a' dimer, A0 is one or more chlorophyll a, A1 is one or both phylloquinones and FX is a shared 4Fe-4S iron-sulfur center..

The protein resides in the plastid. It localises to the chloroplast thylakoid membrane. It catalyses the reaction reduced [plastocyanin] + hnu + oxidized [2Fe-2S]-[ferredoxin] = oxidized [plastocyanin] + reduced [2Fe-2S]-[ferredoxin]. PsaA and PsaB bind P700, the primary electron donor of photosystem I (PSI), as well as the electron acceptors A0, A1 and FX. PSI is a plastocyanin/cytochrome c6-ferredoxin oxidoreductase, converting photonic excitation into a charge separation, which transfers an electron from the donor P700 chlorophyll pair to the spectroscopically characterized acceptors A0, A1, FX, FA and FB in turn. Oxidized P700 is reduced on the lumenal side of the thylakoid membrane by plastocyanin or cytochrome c6. In Porphyra purpurea (Red seaweed), this protein is Photosystem I P700 chlorophyll a apoprotein A2.